Consider the following 2203-residue polypeptide: Genome polyprotein (2203 aa).

Gly-2 carries the N-myristoyl glycine; by host lipid modification. Residues 2 to 1513 (GAQVSTQKTG…HVSRAFICLQ (1512 aa)) are Cytoplasmic-facing. Positions 567-583 (ELQNDVRQAVEGAIGRV) are amphipathic alpha-helix. Catalysis depends on for protease 2A activity residues His-890 and Asp-908. Zn(2+) contacts are provided by Cys-925 and Cys-927. The For protease 2A activity role is filled by Cys-979. Zn(2+) contacts are provided by Cys-985 and His-987. The tract at residues 1119-1191 (SNGWLKKFTE…EQSAPSQSDQ (73 aa)) is membrane-binding. Positions 1119–1257 (SNGWLKKFTE…SPGAGKSVAT (139 aa)) are oligomerization. Positions 1140–1144 (AVKIQ) are RNA-binding. The SF3 helicase domain occupies 1223-1379 (EKKMSNYIQF…SMYSQNGKIN (157 aa)). Cys-1387, Cys-1399, and Cys-1404 together coordinate Zn(2+). A C4-type; degenerate zinc finger spans residues 1387–1404 (CDEECCPVNFKRCCPLVC). The segment at 1431 to 1438 (EYNHRHSV) is RNA-binding. The oligomerization stretch occupies residues 1442-1447 (LEALFQ). An intramembrane segment occupies 1514–1529 (ALTTFVSVAGIIYIIY). At 1530–2203 (KLFAGFQGAY…TLRRKWLDSF (674 aa)) the chain is on the cytoplasmic side. Tyr-1539 is subject to O-(5'-phospho-RNA)-tyrosine. The region spanning 1559–1737 (GPAFEFAVAM…FSAALLRHYF (179 aa)) is the Peptidase C3 domain. Residues His-1598, Glu-1629, and Cys-1705 each act as for protease 3C activity in the active site. The RdRp catalytic domain maps to 1968 to 2084 (GHLIAFDYSG…SYPWPIDASL (117 aa)). Residues Asp-1974 and Asp-2070 each coordinate Mg(2+).

Belongs to the picornaviruses polyprotein family. Interacts with capsid protein VP1 and capsid protein VP3 to form heterotrimeric protomers. In terms of assembly, interacts with capsid protein VP0, and capsid protein VP3 to form heterotrimeric protomers. Five protomers subsequently associate to form pentamers which serve as building blocks for the capsid. Interacts with capsid protein VP2, capsid protein VP3 and capsid protein VP4 following cleavage of capsid protein VP0. As to quaternary structure, interacts with capsid protein VP1 and capsid protein VP3 in the mature capsid. Interacts with capsid protein VP0 and capsid protein VP1 to form heterotrimeric protomers. Five protomers subsequently associate to form pentamers which serve as building blocks for the capsid. Interacts with capsid protein VP4 in the mature capsid. Interacts with protein 2C; this interaction may be important for virion morphogenesis. In terms of assembly, interacts with capsid protein VP1 and capsid protein VP3. As to quaternary structure, homodimer. Homohexamer; forms a hexameric ring structure with 6-fold symmetry characteristic of AAA+ ATPases. Interacts (via N-terminus) with host RTN3 (via reticulon domain); this interaction is important for viral replication. Interacts with capsid protein VP3; this interaction may be important for virion morphogenesis. In terms of assembly, interacts with protein 3CD. As to quaternary structure, homodimer. Interacts with host GBF1. Interacts (via GOLD domain) with host ACBD3 (via GOLD domain); this interaction allows the formation of a viral protein 3A/ACBD3 heterotetramer with a 2:2 stoichiometry, which will stimulate the recruitment of host PI4KB in order to synthesize PI4P at the viral RNA replication sites. Interacts with RNA-directed RNA polymerase. In terms of assembly, interacts with protein 3AB and with RNA-directed RNA polymerase. As to quaternary structure, interacts with Viral protein genome-linked and with protein 3CD. Mg(2+) serves as cofactor. Post-translationally, specific enzymatic cleavages in vivo by the viral proteases yield processing intermediates and the mature proteins. In terms of processing, myristoylation is required for the formation of pentamers during virus assembly. Further assembly of 12 pentamers and a molecule of genomic RNA generates the provirion. During virion maturation, immature virions are rendered infectious following cleavage of VP0 into VP4 and VP2. This maturation seems to be an autocatalytic event triggered by the presence of RNA in the capsid and it is followed by a conformational change infectious virion. Post-translationally, myristoylation is required during RNA encapsidation and formation of the mature virus particle. In terms of processing, VPg is uridylylated by the polymerase into VPg-pUpU. This acts as a nucleotide-peptide primer for the genomic RNA replication.

It is found in the virion. Its subcellular location is the host cytoplasm. It localises to the host cytoplasmic vesicle membrane. The protein resides in the host nucleus. The catalysed reaction is a ribonucleoside 5'-triphosphate + H2O = a ribonucleoside 5'-diphosphate + phosphate + H(+). The enzyme catalyses Selective cleavage of Tyr-|-Gly bond in the picornavirus polyprotein.. It carries out the reaction RNA(n) + a ribonucleoside 5'-triphosphate = RNA(n+1) + diphosphate. It catalyses the reaction Selective cleavage of Gln-|-Gly bond in the poliovirus polyprotein. In other picornavirus reactions Glu may be substituted for Gln, and Ser or Thr for Gly.. Its activity is regulated as follows. Replication or transcription is subject to high level of random mutations by the nucleotide analog ribavirin. Forms an icosahedral capsid of pseudo T=3 symmetry with capsid proteins VP2 and VP3. The capsid is 300 Angstroms in diameter, composed of 60 copies of each capsid protein and enclosing the viral positive strand RNA genome. Capsid protein VP1 mainly forms the vertices of the capsid. Capsid protein VP1 interacts with host cell receptor to provide virion attachment to target host cells. This attachment induces virion internalization. Tyrosine kinases are probably involved in the entry process. After binding to its receptor, the capsid undergoes conformational changes. Capsid protein VP1 N-terminus (that contains an amphipathic alpha-helix) and capsid protein VP4 are externalized. Together, they shape a pore in the host membrane through which viral genome is translocated to host cell cytoplasm. In terms of biological role, forms an icosahedral capsid of pseudo T=3 symmetry with capsid proteins VP2 and VP3. The capsid is 300 Angstroms in diameter, composed of 60 copies of each capsid protein and enclosing the viral positive strand RNA genome. Its function is as follows. Lies on the inner surface of the capsid shell. After binding to the host receptor, the capsid undergoes conformational changes. Capsid protein VP4 is released, Capsid protein VP1 N-terminus is externalized, and together, they shape a pore in the host membrane through which the viral genome is translocated into the host cell cytoplasm. Functionally, component of immature procapsids, which is cleaved into capsid proteins VP4 and VP2 after maturation. Allows the capsid to remain inactive before the maturation step. Cysteine protease that cleaves viral polyprotein and specific host proteins. It is responsible for the autocatalytic cleavage between the P1 and P2 regions, which is the first cleavage occurring in the polyprotein. Also cleaves the host translation initiation factor EIF4G1, in order to shut down the capped cellular mRNA translation. Inhibits the host nucleus-cytoplasm protein and RNA trafficking by cleaving host members of the nuclear pores. Counteracts stress granule formation probably by antagonizing its assembly or promoting its dissassembly. In terms of biological role, plays an essential role in the virus replication cycle by acting as a viroporin. Creates a pore in the host endoplasmic reticulum and as a consequence releases Ca2+ in the cytoplasm of infected cell. In turn, high levels of cytoplasmic calcium may trigger membrane trafficking and transport of viral ER-associated proteins to viroplasms, sites of viral genome replication. Its function is as follows. Induces and associates with structural rearrangements of intracellular membranes. Displays RNA-binding, nucleotide binding and NTPase activities. May play a role in virion morphogenesis and viral RNA encapsidation by interacting with the capsid protein VP3. Functionally, localizes the viral replication complex to the surface of membranous vesicles. Together with protein 3CD binds the Cis-Active RNA Element (CRE) which is involved in RNA synthesis initiation. Acts as a cofactor to stimulate the activity of 3D polymerase, maybe through a nucleid acid chaperone activity. Localizes the viral replication complex to the surface of membranous vesicles. It inhibits host cell endoplasmic reticulum-to-Golgi apparatus transport and causes the disassembly of the Golgi complex, possibly through GBF1 interaction. This would result in depletion of MHC, trail receptors and IFN receptors at the host cell surface. Plays an essential role in viral RNA replication by recruiting ACBD3 and PI4KB at the viral replication sites, thereby allowing the formation of the rearranged membranous structures where viral replication takes place. In terms of biological role, acts as a primer for viral RNA replication and remains covalently bound to viral genomic RNA. VPg is uridylylated prior to priming replication into VPg-pUpU. The oriI viral genomic sequence may act as a template for this. The VPg-pUpU is then used as primer on the genomic RNA poly(A) by the RNA-dependent RNA polymerase to replicate the viral genome. During genome replication, the VPg-RNA linkage is removed by the host TDP2, thereby accelerating replication. During the late stage of the replication cycle, host TDP2 is excluded from sites of viral RNA synthesis and encapsidation, allowing for the generation of progeny virions. Its function is as follows. Involved in the viral replication complex and viral polypeptide maturation. It exhibits protease activity with a specificity and catalytic efficiency that is different from protease 3C. Protein 3CD lacks polymerase activity. Protein 3CD binds to the 5'UTR of the viral genome. Functionally, replicates the viral genomic RNA on the surface of intracellular membranes. May form linear arrays of subunits that propagate along a strong head-to-tail interaction called interface-I. Covalently attaches UMP to a tyrosine of VPg, which is used to prime RNA synthesis. The positive stranded RNA genome is first replicated at virus induced membranous vesicles, creating a dsRNA genomic replication form. This dsRNA is then used as template to synthesize positive stranded RNA genomes. ss(+)RNA genomes are either translated, replicated or encapsidated. Major viral protease that mediates proteolytic processing of the polyprotein. Cleaves host EIF5B, contributing to host translation shutoff. Also cleaves host PABPC1, contributing to host translation shutoff. Cleaves host NLRP1, triggers host N-glycine-mediated degradation of the autoinhibitory NLRP1 N-terminal fragment. The sequence is that of Genome polyprotein from Echovirus 9 (strain Barty).